Reading from the N-terminus, the 117-residue chain is Protein YchN (117 aa).

This sequence to M.jannaschii MJ0989. Homohexamer. The hexamer is formed by a dimer of trimers.

The polypeptide is Protein YchN (ychN) (Escherichia coli O157:H7).